Reading from the N-terminus, the 861-residue chain is Piwi-like protein 1 (861 aa).

A compositionally biased stretch (basic residues) spans 1 to 13 (MTGRARARARGRA). Positions 1 to 64 (MTGRARARAR…TAGGTAKSQG (64 aa)) are disordered. Omega-N-methylarginine; by PRMT5; alternate is present on Arg-14. At Arg-14 the chain carries Symmetric dimethylarginine; by PRMT5; alternate. The span at 17-27 (ETAQLVGSTAS) shows a compositional bias: polar residues. Arg-49 is subject to Omega-N-methylarginine; by PRMT5. Arg-53 bears the Omega-N-methylarginine; alternate mark. Residue Arg-53 is modified to Symmetric dimethylarginine; alternate. Positions 217-224 (RRLLKIMN) match the D-box motif. The region spanning 278 to 391 (TVLDFMFNFY…LIPELCYLTG (114 aa)) is the PAZ domain. A required for binding 2'-O-methylated 3'-end of piRNAs region spans residues 316–318 (TYR). The residue at position 370 (Arg-370) is an Omega-N-methylarginine; by PRMT5. The segment at 479-615 (SKETRGAPLI…LQMNCKMGGE (137 aa)) is MID region. A Piwi domain is found at 555 to 847 (IVVCLLSSNR…LAFLVGQSIH (293 aa)). Catalysis depends on residues Asp-632, Glu-670, Asp-702, and His-836.

Belongs to the argonaute family. Piwi subfamily. As to quaternary structure, interacts (via Piwi domain) with DICER1, suggesting that it forms ribonucleoprotein RISC complexes; this interaction is regulated by HSP90AB1 activity. Interacts with MAEL, KIF17, PABPC1, PRMT5 and WDR77. Interacts (when methylated on arginine residues) with TDRD1, TDRKH/TDRD2, RNF17/TDRD4, TDRD6, TDRD7 and TDRD9. Interacts with CLOCK. Interacts with MOV10L1. Interacts with ANAPC10; interaction oly takes place following piRNA-binding. Interacts with RNF8; leading to sequester RNF8 in the cytoplasm. Interacts with TEX19. Mg(2+) is required as a cofactor. Arginine methylation by PRMT5 is required for the interaction with Tudor domain-containing protein (TDRD1, TDRKH/TDRD2, RNF17/TDRD4, TDRD6, TDRD7 and TDRD9) and subsequent localization to the meiotic nuage, also named P granule. In terms of processing, ubiquitinated by the anaphase promoting complex/cyclosome (APC/C) in late spermatids, leading to its degradation. Ubiquitination only takes place following piRNA-binding in adult testis. Ubiquitination and degradation in late spermatogenesis by APC/C is probably required to release RNF8 from the cytoplasm and promote histone to protamine exchange by RNF8. As to expression, expressed in spermatocytes and spermatids. Also detected in prostate cancer (at protein level). Detected in most fetal and adult tissues. Expressed in testes, specifically in germline cells; detected in spermatocytes and spermatids during spermatogenesis. Increased expression in testicular tumors originating from embryonic germ cells with retention of germ cells phenotype. No expression in testicular tumors of somatic origin, such as Sertoli cell and Leydig cell tumors. Overexpressed in gastric cancer cells. Isoform 3: Ubiquitously expressed, and specifically in CD34(+) hematopoietic progenitor cells but not in more differentiated cells.

The protein resides in the cytoplasm. Its function is as follows. Endoribonuclease that plays a central role in postnatal germ cells by repressing transposable elements and preventing their mobilization, which is essential for the germline integrity. Acts via the piRNA metabolic process, which mediates the repression of transposable elements during meiosis by forming complexes composed of piRNAs and Piwi proteins and governs the methylation and subsequent repression of transposons. Directly binds methylated piRNAs, a class of 24 to 30 nucleotide RNAs that are generated by a Dicer-independent mechanism and are primarily derived from transposons and other repeated sequence elements. Strongly prefers a uridine in the first position of their guide (g1U preference, also named 1U-bias). Not involved in the piRNA amplification loop, also named ping-pong amplification cycle. Acts as an endoribonuclease that cleaves transposon messenger RNAs. Besides their function in transposable elements repression, piRNAs are probably involved in other processes during meiosis such as translation regulation. Probable component of some RISC complex, which mediates RNA cleavage and translational silencing. Also plays a role in the formation of chromatoid bodies and is required for some miRNAs stability. Required to sequester RNF8 in the cytoplasm until late spermatogenesis; RNF8 being released upon ubiquitination and degradation of PIWIL1. May be a negative developmental regulator. This chain is Piwi-like protein 1 (PIWIL1), found in Homo sapiens (Human).